The chain runs to 871 residues: MYSACAVALRAGARRVVRRVPKSARALPRAAAARRQISTTAARSTDLTTRGMIVQTLSSVGSKREVQQYLSLFTSVSSQRFAVIKVGGAILTDYLDELCAALKFLYTVGLYPVIVHGAGPQLNRLLEDAGVEPQFEEGIRVTDAKTLRVARDLFLQENLKLVNKLEEMGVHAQPLTTGMFRADYLNKEKWGLVGKVTGVNKQAIETAISNGYLPILTSMAETDDGQILNVNADVAAAELARALEPLKVVYLSEKGGLFDAGGQKISAINLDEEYEHLMSQAWVKYGTRLKIKEIKELLDTLPRTTSVAIIHPEELQKELFTDSGAGTLIRRGSKLQASTSLSEFKDLEALKSVLIRDREGPDAKETVEKYLDFLKENPFKAYFDSSMNALAIVLPASEGRQATLATLTITKSGWLTNIADNIFTALKKEHPSLVWTVKEDDENLGWFFDKADGSITRQGDVMFWYGIENGDEIVKLMKDFTENGRAMLGNSNLESRLRQAASKPAAQQVRGYSTLARRPALPKFSISNRRGYLTQTNPNPPVGKQNASMDRPARVALIGARGYTGQELIRLIDSHPNMELHHVSSRELAGKKLEGYNKQEVIYENLSPEDVRDMEKRGEIDCWVMALPNGVCKPFVEAVWEGRKASGHKSVIIDLSADYRFDNKWTYGLPELVQRSNIIQATQIANPGCYATAAQLGISPLVPHLGGMPHVFGVSGYSGAGTKPSPKNDVENLTNNIIPYSLTGHIHEREVSSQLGAEIAFMPHVAVWFRGIHHTISIPLNKSMTSRDIRQLYQDRYAGEKLVKVVGEAPSVKNIGGKHGVEIGGFEVDKSGRRVVICATIDNLLKGAATQCLQNMNLALGYAEYEGIPTM.

Residues 1–44 constitute a mitochondrion transit peptide; that stretch reads MYSACAVALRAGARRVVRRVPKSARALPRAAAARRQISTTAARS. An N-acetyltransferase domain is found at 336–488; the sequence is QASTSLSEFK…DFTENGRAML (153 aa). Cys-689 is an active-site residue.

This sequence in the N-terminal section; belongs to the acetylglutamate kinase family. In the C-terminal section; belongs to the NAGSA dehydrogenase family. In terms of processing, the protein precursor is cleaved into the two biologically active enzymes, the kinase and the reductase.

It localises to the mitochondrion. The catalysed reaction is N-acetyl-L-glutamate 5-semialdehyde + phosphate + NADP(+) = N-acetyl-L-glutamyl 5-phosphate + NADPH + H(+). It catalyses the reaction N-acetyl-L-glutamate + ATP = N-acetyl-L-glutamyl 5-phosphate + ADP. Its pathway is amino-acid biosynthesis; L-arginine biosynthesis; N(2)-acetyl-L-ornithine from L-glutamate: step 2/4. It participates in amino-acid biosynthesis; L-arginine biosynthesis; N(2)-acetyl-L-ornithine from L-glutamate: step 3/4. The chain is Protein arg-6, mitochondrial (arg-6) from Neurospora crassa (strain ATCC 24698 / 74-OR23-1A / CBS 708.71 / DSM 1257 / FGSC 987).